Reading from the N-terminus, the 279-residue chain is Phosphate import ATP-binding protein PstB (279 aa).

The ABC transporter domain maps to 33 to 274; it reads LDINKLNLFY…PLKKKTEDYI (242 aa). 65 to 72 contributes to the ATP binding site; the sequence is GPSGCGKS.

This sequence belongs to the ABC transporter superfamily. Phosphate importer (TC 3.A.1.7) family. As to quaternary structure, the complex is composed of two ATP-binding proteins (PstB), two transmembrane proteins (PstC and PstA) and a solute-binding protein (PstS).

It localises to the cell inner membrane. The catalysed reaction is phosphate(out) + ATP + H2O = ADP + 2 phosphate(in) + H(+). Part of the ABC transporter complex PstSACB involved in phosphate import. Responsible for energy coupling to the transport system. The protein is Phosphate import ATP-binding protein PstB of Colwellia psychrerythraea (strain 34H / ATCC BAA-681) (Vibrio psychroerythus).